Here is a 33-residue protein sequence, read N- to C-terminus: uncharacterized protein (33 aa).

This is an uncharacterized protein from Saccharomyces cerevisiae (strain ATCC 204508 / S288c) (Baker's yeast).